Reading from the N-terminus, the 158-residue chain is Transcriptional repressor NrdR (158 aa).

The disordered stretch occupies residues 1–20 (MRCPYCQSEDTQVKDSRPAE). A zinc finger spans residues 3 to 34 (CPYCQSEDTQVKDSRPAEDGAVIRRRRVCSVC). A compositionally biased stretch (basic and acidic residues) spans 11-20 (TQVKDSRPAE). One can recognise an ATP-cone domain in the interval 49–139 (LMVVKKSGRR…VYRNFSKAVD (91 aa)).

Belongs to the NrdR family. It depends on Zn(2+) as a cofactor.

Its function is as follows. Negatively regulates transcription of bacterial ribonucleotide reductase nrd genes and operons by binding to NrdR-boxes. The chain is Transcriptional repressor NrdR from Brucella anthropi (strain ATCC 49188 / DSM 6882 / CCUG 24695 / JCM 21032 / LMG 3331 / NBRC 15819 / NCTC 12168 / Alc 37) (Ochrobactrum anthropi).